A 97-amino-acid chain; its full sequence is Large ribosomal subunit protein bL28 (97 aa).

This sequence belongs to the bacterial ribosomal protein bL28 family.

The chain is Large ribosomal subunit protein bL28 from Brucella ovis (strain ATCC 25840 / 63/290 / NCTC 10512).